We begin with the raw amino-acid sequence, 86 residues long: Neurotoxin-like protein NTL2 (86 aa).

Positions 1–21 are cleaved as a signal peptide; it reads MKTLLLSLVVVTIVCLDLGYT. 4 cysteine pairs are disulfide-bonded: cysteine 24–cysteine 45, cysteine 38–cysteine 63, cysteine 67–cysteine 78, and cysteine 79–cysteine 84.

Belongs to the three-finger toxin family. Short-chain subfamily. Orphan group I sub-subfamily. Expressed by the venom gland.

The protein resides in the secreted. This is Neurotoxin-like protein NTL2 from Naja atra (Chinese cobra).